We begin with the raw amino-acid sequence, 336 residues long: Transmembrane protein 19 (336 aa).

6 consecutive transmembrane segments (helical) span residues 15-35 (MITN…FWII), 49-69 (ISPW…SNGL), 84-104 (VVGF…LMFF), 218-238 (VTVV…IAYF), 257-277 (IIAF…YLGA), and 313-333 (VNLF…WGFW).

The protein belongs to the TMEM19 family.

The protein localises to the membrane. This is Transmembrane protein 19 (TMEM19) from Homo sapiens (Human).